A 424-amino-acid chain; its full sequence is 26S proteasome regulatory subunit 6A homolog A (424 aa).

The interval 1–21 (MATPMVEDTSSFEEDQLASMS) is disordered. Position 2 is an N-acetylalanine (Ala-2). The residue at position 19 (Ser-19) is a Phosphoserine. 212–219 (GPPGTGKT) lines the ATP pocket. Lys-235 is covalently cross-linked (Glycyl lysine isopeptide (Lys-Gly) (interchain with G-Cter in ubiquitin)). Thr-278 bears the O-acetylthreonine mark. Glycyl lysine isopeptide (Lys-Gly) (interchain with G-Cter in ubiquitin) cross-links involve residues Lys-279 and Lys-416.

Belongs to the AAA ATPase family. In terms of assembly, component of the 19S regulatory particle (RP/PA700) base subcomplex of the 26S proteasome. The 26S proteasome is composed of a core protease (CP), known as the 20S proteasome, capped at one or both ends by the 19S regulatory particle (RP/PA700). The RP/PA700 complex is composed of at least 17 different subunits in two subcomplexes, the base and the lid, which form the portions proximal and distal to the 20S proteolytic core, respectively. As to expression, ubiquitous.

The protein resides in the cytoplasm. The protein localises to the nucleus. Functionally, the 26S proteasome is involved in the ATP-dependent degradation of ubiquitinated proteins. The regulatory (or ATPase) complex confers ATP dependency and substrate specificity to the 26S complex. Interacts with transit peptides of proteins targeted to the chloroplast, and may be involved in the degradation of unimported plastid protein precursors. Plays a essential role in the gametophyte development. Involved in tolerance to zinc deficiency, possibly through alleviation of oxidative stresses or processing of poly-ubiquitinated proteins. In Arabidopsis thaliana (Mouse-ear cress), this protein is 26S proteasome regulatory subunit 6A homolog A.